A 224-amino-acid polypeptide reads, in one-letter code: Deoxyribose-phosphate aldolase (224 aa).

Asp-91 serves as the catalytic Proton donor/acceptor. Catalysis depends on Lys-152, which acts as the Schiff-base intermediate with acetaldehyde. Lys-181 (proton donor/acceptor) is an active-site residue.

The protein belongs to the DeoC/FbaB aldolase family. DeoC type 1 subfamily.

It is found in the cytoplasm. The enzyme catalyses 2-deoxy-D-ribose 5-phosphate = D-glyceraldehyde 3-phosphate + acetaldehyde. Its pathway is carbohydrate degradation; 2-deoxy-D-ribose 1-phosphate degradation; D-glyceraldehyde 3-phosphate and acetaldehyde from 2-deoxy-alpha-D-ribose 1-phosphate: step 2/2. Catalyzes a reversible aldol reaction between acetaldehyde and D-glyceraldehyde 3-phosphate to generate 2-deoxy-D-ribose 5-phosphate. The polypeptide is Deoxyribose-phosphate aldolase (Mycoplasma pneumoniae (strain ATCC 29342 / M129 / Subtype 1) (Mycoplasmoides pneumoniae)).